The following is a 971-amino-acid chain: Nitrogen regulatory protein areA (971 aa).

Disordered stretches follow at residues 39 to 61, 146 to 169, 262 to 307, 390 to 416, and 587 to 691; these read IHNA…DASA, HKEE…DAGS, QPAH…VNST, SASM…NVST, and DNNG…GNAP. The span at 42–59 shows a compositional bias: polar residues; that stretch reads APTQRTXNSNRIPNSRDA. Positions 146–159 are enriched in basic and acidic residues; it reads HKEEQQQRQDEADA. Polar residues-rich tracts occupy residues 262–274 and 297–307; these read QPAH…SEFN and FSPQVPAVNST. Over residues 390–400 the composition is skewed to low complexity; it reads SASMSNNNNNS. Polar residues-rich tracts occupy residues 597 to 606 and 632 to 645; these read LERSQSQSFR and NGFE…QSSP. Composition is skewed to low complexity over residues 654-663 and 680-691; these read SGFSSVAPSR and AAAGNGNDGNAP. The GATA-type zinc finger occupies 694–718; it reads CTNCFTQTTPLWRRNPEGQPLCNAC. Residues 742 to 918 form a disordered region; it reads NRGSGTNVPV…PFGSSAGLSS (177 aa). Over residues 744-794 the composition is skewed to polar residues; the sequence is GSGTNVPVGGSSTRSKKTASTLNSRKNSTLSMSTATANSTKPNSSNPTPRV. Over residues 796 to 826 the composition is skewed to low complexity; it reads TPPATSQPPSSKDVDSPVSGTTSGANTAGST. The segment covering 832–845 has biased composition (gly residues); sequence GGPGPSSGAVGGKG. Over residues 863-875 the composition is skewed to polar residues; that stretch reads SSMSMQRPATASS. The segment covering 892–918 has biased composition (low complexity); that stretch reads SMDIDSPDSTSSIDGPRPFGSSAGLSS.

The protein resides in the nucleus. Functionally, major nitrogen regulatory protein. Positively acting regulatory gene of nitrogen metabolite repression. This chain is Nitrogen regulatory protein areA (AREA), found in Fusarium fujikuroi (Bakanae and foot rot disease fungus).